The following is a 455-amino-acid chain: Probable ATP-dependent RNA helicase DDX47 (455 aa).

A disordered region spans residues 1–21 (MAADEEPDSPSGALQTAAEEE). An N-acetylalanine modification is found at Ala-2. Phosphoserine is present on Ser-9. A Q motif motif is present at residues 24-52 (KTFKDLGVTDVLCEACDQLGWAKPTKIQI). The Helicase ATP-binding domain occupies 55–226 (IPLALQGRDI…RAALKNPVKC (172 aa)). Residue 68 to 75 (AETGSGKT) participates in ATP binding. Thr-149 carries the phosphothreonine modification. The DEAD box motif lies at 174–177 (DEAD). Residues 237–397 (KLQQYYLFIP…VFPTQDEEVM (161 aa)) enclose the Helicase C-terminal domain. The interval 412–455 (MELREHGEKKKRKREDAGDDDDKEGAIGVRNKVAGGKMKKRKGR) is disordered.

This sequence belongs to the DEAD box helicase family. DDX47/RRP3 subfamily. Interacts with AGO1 and AGO2. Interacts with GABARAP. Interacts with NOL8; the interaction is RNA-dependent.

The protein localises to the nucleus. It is found in the nucleolus. The catalysed reaction is ATP + H2O = ADP + phosphate + H(+). Functionally, involved in apoptosis. May have a role in rRNA processing and mRNA splicing. Associates with pre-rRNA precursors. This is Probable ATP-dependent RNA helicase DDX47 (Ddx47) from Mus musculus (Mouse).